A 482-amino-acid polypeptide reads, in one-letter code: UDP-glycosyltransferase 1 (482 aa).

Asn243 carries an N-linked (GlcNAc...) asparagine glycan. A helical transmembrane segment spans residues Ile450–Gly470.

Belongs to the glycosyltransferase 28 family.

It localises to the membrane. The enzyme catalyses exophillate aglycone + UDP-alpha-D-glucose = exophillate + UDP + H(+). The protein operates within secondary metabolite biosynthesis. Acts as a depside 2-O-glucosyltransferase that catalyzes the first glycosylation step during phaeomoniecin D biosynthesis by producing the intermediate exophillic acid which is further O-galactosylated into phaeomoniecin D by the C-galactosyltransferase OGT2. This Phaeomoniella chlamydospora (Phaeoacremonium chlamydosporum) protein is UDP-glycosyltransferase 1.